The sequence spans 245 residues: MLRTGVIAKKLGMTRLFLEDGRQVPVTVLHVDNVQVIAQRTAEQDGYVALQLGAGEAKAKRTTAALRGHFAKANVAPKRKIAEFRVSPENLVEVGEEIVADHYFEGQYVDIAGTSIGKGFAGAMKRHNFGGLRASHGVSISHRSHGSTGQCQDPGKVFKGKKMAGHLGAVRVTTQNLQVVKTDAERGLIMVKGSVPGSKGGWVTIKDAVKKPLAESTVFPAATRSKAVQAEAAAPAEAAAPEGDN.

N5-methylglutamine is present on Gln-152. Positions 224 to 245 (RSKAVQAEAAAPAEAAAPEGDN) are disordered. A compositionally biased stretch (low complexity) spans 230-245 (AEAAAPAEAAAPEGDN).

Belongs to the universal ribosomal protein uL3 family. In terms of assembly, part of the 50S ribosomal subunit. Forms a cluster with proteins L14 and L19. Post-translationally, methylated by PrmB.

In terms of biological role, one of the primary rRNA binding proteins, it binds directly near the 3'-end of the 23S rRNA, where it nucleates assembly of the 50S subunit. The polypeptide is Large ribosomal subunit protein uL3 (Paracoccus denitrificans (strain Pd 1222)).